Consider the following 551-residue polypeptide: Membrane protein insertase YidC (551 aa).

Residues 6–26 (YFLWGALFISGYLLFLQWSQD) traverse the membrane as a helical segment. Low complexity predominate over residues 34–50 (SVAQSTQSQSETNSQMS). The segment at 34–68 (SVAQSTQSQSETNSQMSDDLPMATQSTTEANAEIP) is disordered. Positions 56–68 (ATQSTTEANAEIP) are enriched in polar residues. The next 5 helical transmembrane spans lie at 340–360 (TVDY…LTLI), 363–383 (FVIN…AIFF), 433–453 (LGGC…YWVL), 464–484 (FFLW…PILM), and 509–529 (IMPV…VLYW).

This sequence belongs to the OXA1/ALB3/YidC family. Type 1 subfamily. Interacts with the Sec translocase complex via SecD. Specifically interacts with transmembrane segments of nascent integral membrane proteins during membrane integration.

Its subcellular location is the cell inner membrane. Required for the insertion and/or proper folding and/or complex formation of integral membrane proteins into the membrane. Involved in integration of membrane proteins that insert both dependently and independently of the Sec translocase complex, as well as at least some lipoproteins. Aids folding of multispanning membrane proteins. The chain is Membrane protein insertase YidC from Marinomonas sp. (strain MWYL1).